Consider the following 358-residue polypeptide: 3'(2'),5'-bisphosphate nucleotidase 2 (358 aa).

Asp54 acts as the Proton acceptor in catalysis. Residues Glu77, Asp141, Ile143, and Asp144 each coordinate Mg(2+). The active-site Proton acceptor is the Thr146. The adenosine 3',5'-bisphosphate site is built by Thr146, His243, Ser272, Lys275, Arg289, and Asp302. AMP contacts are provided by His243, Ser272, Lys275, Arg289, and Asp302. Asp302 provides a ligand contact to Mg(2+).

The protein belongs to the inositol monophosphatase superfamily. Mg(2+) serves as cofactor.

The catalysed reaction is 3'-phosphoadenylyl sulfate + H2O = adenosine 5'-phosphosulfate + phosphate. The enzyme catalyses adenosine 3',5'-bisphosphate + H2O = AMP + phosphate. It carries out the reaction adenosine 2',5'-bisphosphate + H2O = AMP + phosphate. In terms of biological role, phosphatase that converts adenosine 3'-phosphate 5'-phosphosulfate (PAPS) to adenosine 5'-phosphosulfate (APS) and 3'(2')-phosphoadenosine 5'-phosphate (PAP) to AMP. Regulates the flux of sulfur in the sulfur-activation pathway by converting PAPS to APS. Involved in salt tolerance. The sequence is that of 3'(2'),5'-bisphosphate nucleotidase 2 (HAL22) from Candida albicans (strain SC5314 / ATCC MYA-2876) (Yeast).